The chain runs to 359 residues: MSDDFNDRRRRPAAFSVEAEEAIEREMEQTPRRAPGSFSEKVVMTPDAEDPFIGTTAAVESLNLPEAMPRRRRLSFGKIAAGAFGILISLAVGLWIDRLVRDLFSRADWLGYGAVAVVAIGVIAFLIVVAREVFGMMQLTAVQTLKADLAAAAASGKTQAARAATARLVHLLAGNPRTAKGRARLAETEGDIIDAPHLIELTERELLAPLDREARRIILGAAKRVSIVTAVSPRALVDLGYVIYESARMIRAMAELYGGRPGTLGLLRLMRDVIAHLAVTGSIAVGDSLIQQILGHGLASKLSARLGEGVINGLMTARIGIAAMDLCRPMPFRALKRPSIGDFLGDLAPGTARSEGSAG.

The next 2 membrane-spanning stretches (helical) occupy residues 76 to 96 (FGKI…GLWI) and 109 to 129 (WLGY…LIVV).

It belongs to the UPF0283 family.

It is found in the cell inner membrane. This chain is UPF0283 membrane protein R01807, found in Rhizobium meliloti (strain 1021) (Ensifer meliloti).